The sequence spans 303 residues: B1 kinase (303 aa).

It belongs to the protein kinase superfamily. Ser/Thr protein kinase family. Poxviruses subfamily. Interacts with host JIP1; this interaction increases the amount of MAPK bound to JIP1 and subsequently increases the activity of transcription factors, such as JUN, that respond to these complexes. Interacts with protein OPG198; this interaction inhibits the repressive activity of OPG198 pseudokinase on viral replication factory formation. It depends on Mg(2+) as a cofactor. Autophosphorylated.

The protein localises to the virion. The protein resides in the host cytoplasm. It catalyses the reaction L-seryl-[protein] + ATP = O-phospho-L-seryl-[protein] + ADP + H(+). The enzyme catalyses L-threonyl-[protein] + ATP = O-phospho-L-threonyl-[protein] + ADP + H(+). Essential serine/threonine-protein kinase that plays different role in the viral life cycle. Phosphorylates the host small ribosomal protein RACK1 thereby customizing the ribosomes to a state optimal for viral mRNAs (which contain poly-A leaders) but not for host mRNAs. Facilitates viral DNA replication by inhibiting host BANF1, a cellular host defense responsive to foreign DNA. Phosphorylates host BANF1 on serine and threonine residues; this leads to BANF1 relocalization to the cytoplasm, loss of dimerization and impaired DNA binding activity. Indeed, BANF1 activity depends on its DNA-binding property which is blocked by VPK1-mediated phosphorylation. Required for viral intermediate genes expression, probably by inhibiting host BANF1. Modulates cellular responses via host JUN by two different mechanisms, either by direct phosphorylation or by modulation of upstream JIP1-MAPK complexes. Seems to participate in the accumulation/processing of late proteins and thus in virion maturation. In addition, inhibits B12 repressive activity on viral DNA replication via a phosphorylation-dependent mechanism. The protein is B1 kinase (OPG187) of Cynomys gunnisoni (Gunnison's prairie dog).